A 505-amino-acid chain; its full sequence is Catalase (505 aa).

Positions 1-25 are disordered; sequence MSKQDGKLTGLFGAPVSDRENSMTA. Residues H56 and N129 contribute to the active site. Y339 lines the heme pocket.

Belongs to the catalase family. Homodimer. Heme is required as a cofactor.

The catalysed reaction is 2 H2O2 = O2 + 2 H2O. In terms of biological role, decomposes hydrogen peroxide into water and oxygen; serves to protect cells from the toxic effects of hydrogen peroxide. This is Catalase (katA) from Staphylococcus warneri.